Reading from the N-terminus, the 696-residue chain is DNA-directed RNA polymerase subunit beta N-terminal section (696 aa).

Belongs to the RNA polymerase beta chain family. As to quaternary structure, in plastids the minimal PEP RNA polymerase catalytic core is composed of four subunits: alpha, beta, beta', and beta''. When a (nuclear-encoded) sigma factor is associated with the core the holoenzyme is formed, which can initiate transcription.

It localises to the plastid. The protein localises to the chloroplast. The catalysed reaction is RNA(n) + a ribonucleoside 5'-triphosphate = RNA(n+1) + diphosphate. Its function is as follows. DNA-dependent RNA polymerase catalyzes the transcription of DNA into RNA using the four ribonucleoside triphosphates as substrates. The chain is DNA-directed RNA polymerase subunit beta N-terminal section (rpoB1) from Stigeoclonium helveticum (Green alga).